The primary structure comprises 415 residues: Dynein assembly factor with WD repeat domains 1 (415 aa).

WD repeat units follow at residues 90-129 (AHIL…ELHT), 132-172 (GHRN…CFYT), 175-214 (GHTA…EVST), 217-256 (GHFA…KVHV), 259-298 (GHRG…CLAT), 301-340 (GHND…CLCQ), 343-384 (GHKG…QVLE), and 385-415 (GHSD…RIWH).

The protein belongs to the WD repeat WDR69 family. In terms of tissue distribution, expressed in organs bearing motile cilia, including the pronephros, otic vesicles and Kupffer's vesicle.

Its subcellular location is the cytoplasm. The protein localises to the cytoskeleton. It localises to the flagellum basal body. The protein resides in the flagellum axoneme. In terms of biological role, required for axonemal dynein assembly and ciliary motility in ciliated organs, including Kupffer's vesicle, during embryogenesis. Facilitates the onset of robust cilia motility during development. This Danio rerio (Zebrafish) protein is Dynein assembly factor with WD repeat domains 1 (daw1).